The following is a 626-amino-acid chain: (+)-3-carene synthase 2, chloroplastic (626 aa).

A chloroplast-targeting transit peptide spans 1-45 (MSLISAVPLASSCVSKSLISSVREHTALRRAIATLQMSRRGKSVA). Mg(2+)-binding residues include aspartate 377, aspartate 381, and aspartate 529. The DDXXD motif motif lies at 377–381 (DDMYD).

Belongs to the terpene synthase family. Tpsd subfamily. The cofactor is Mg(2+). Mn(2+) serves as cofactor.

The protein localises to the plastid. It is found in the chloroplast. It catalyses the reaction (2E)-geranyl diphosphate = (+)-car-3-ene + diphosphate. The protein operates within terpene metabolism; oleoresin biosynthesis. Its pathway is secondary metabolite biosynthesis; terpenoid biosynthesis. Functionally, monoterpene synthase (TPS) involved in the biosynthesis of monoterpene natural products included in conifer oleoresin secretions and volatile emissions; these compounds contribute to biotic and abiotic stress defense against herbivores and pathogens. Catalyzes the conversion of (2E)-geranyl diphosphate (GPP) to (+)-3-carene. The chain is (+)-3-carene synthase 2, chloroplastic from Pinus banksiana (Jack pine).